A 310-amino-acid polypeptide reads, in one-letter code: AMMECR1-like protein (310 aa).

The disordered stretch occupies residues 26–92 (LSGSGTHSHG…SGALSPLPRP (67 aa)). Polar residues-rich tracts occupy residues 28–66 (GSGT…NVSD) and 74–84 (SPITRMNTASG). Ser74 is subject to Phosphoserine. Positions 97–291 (NSTKNLVVTA…ISYAEYIASR (195 aa)) constitute an AMMECR1 domain.

This is AMMECR1-like protein (Ammecr1l) from Mus musculus (Mouse).